The following is a 35-amino-acid chain: Cytochrome b6-f complex subunit 5 (35 aa).

A helical membrane pass occupies residues 5 to 25; sequence LLCGIVLGLIPVTLTGLFVAA.

The protein belongs to the PetG family. As to quaternary structure, the 4 large subunits of the cytochrome b6-f complex are cytochrome b6, subunit IV (17 kDa polypeptide, PetD), cytochrome f and the Rieske protein, while the 4 small subunits are PetG, PetL, PetM and PetN. The complex functions as a dimer.

Its subcellular location is the plastid. It localises to the organellar chromatophore thylakoid membrane. Its function is as follows. Component of the cytochrome b6-f complex, which mediates electron transfer between photosystem II (PSII) and photosystem I (PSI), cyclic electron flow around PSI, and state transitions. PetG is required for either the stability or assembly of the cytochrome b6-f complex. This chain is Cytochrome b6-f complex subunit 5, found in Paulinella chromatophora.